The following is a 689-amino-acid chain: Beta-adrenergic receptor kinase 1 (689 aa).

An N-terminal region spans residues 1–190; the sequence is MADLEAVLAD…ELNIHLTMND (190 aa). The RGS domain occupies 54–175; that stretch reads TFEKIFSQKL…IESEKFTRFC (122 aa). Residues 191–453 form the Protein kinase domain; it reads FSVHRIIGRG…AQEVKEDPFF (263 aa). ATP contacts are provided by residues 197-205 and Lys220; that span reads IGRGGFGEV. Asp317 acts as the Proton acceptor in catalysis. The 68-residue stretch at 454-521 folds into the AGC-kinase C-terminal domain; it reads KAVDWQMVLL…TISERWQQEV (68 aa). The region spanning 558 to 652 is the PH domain; the sequence is DCIMHGYMSK…WKKELRDVYR (95 aa). Residues 665 to 689 form a disordered region; the sequence is KNKPRSPVVELSKMPLTQRGSANGL. Ser670 bears the Phosphoserine mark.

The protein belongs to the protein kinase superfamily. AGC Ser/Thr protein kinase family. GPRK subfamily. As to quaternary structure, interacts with the heterodimer formed by GNB1 and GNG2. Interacts with GIT1. Interacts with, and phosphorylates chemokine-stimulated CCR5. Interacts with ARRB1. Interacts with LPAR1 and LPAR2. Interacts with RALA in response to LPAR1 activation. ADRBK1 and RALA mutually inhibit each other's binding to LPAR1. Interacts with ADRB2.

It is found in the cytoplasm. The protein localises to the cell membrane. The protein resides in the postsynapse. It localises to the presynapse. It catalyses the reaction [beta-adrenergic receptor] + ATP = [beta-adrenergic receptor]-phosphate + ADP + H(+). With respect to regulation, in contrast to other AGC family kinases, the catalytic activity is solely regulated by the binding of substrates and ligands, not by phosphorylation of the kinase domain. Its function is as follows. Specifically phosphorylates the agonist-occupied form of the beta-adrenergic and closely related receptors, probably inducing a desensitization of them. Does not act on HTR1B/5-hydroxytryptamine 1B receptor. Key regulator of LPAR1 signaling. Competes with RALA for binding to LPAR1 thus affecting the signaling properties of the receptor. Desensitizes LPAR1 and LPAR2 in a phosphorylation-independent manner. Inhibits relaxation of airway smooth muscle in response to blue light. The chain is Beta-adrenergic receptor kinase 1 from Didelphis virginiana (North American opossum).